The sequence spans 135 residues: Small ribosomal subunit protein uS9 (135 aa).

Residues 108 to 118 (VGDPRRTEPHK) show a composition bias toward basic and acidic residues. A disordered region spans residues 108-135 (VGDPRRTEPHKPNRSTKGPRAKRQKSYR). The span at 119–135 (PNRSTKGPRAKRQKSYR) shows a compositional bias: basic residues.

It belongs to the universal ribosomal protein uS9 family.

The polypeptide is Small ribosomal subunit protein uS9 (rps9) (Pyrococcus horikoshii (strain ATCC 700860 / DSM 12428 / JCM 9974 / NBRC 100139 / OT-3)).